A 270-amino-acid polypeptide reads, in one-letter code: UPF0354 protein BCAH187_A4826 (270 aa).

The protein belongs to the UPF0354 family.

The polypeptide is UPF0354 protein BCAH187_A4826 (Bacillus cereus (strain AH187)).